The following is a 350-amino-acid chain: Dihydroorotate dehydrogenase (quinone) (350 aa).

FMN is bound by residues 61–65 and threonine 85; that span reads AGLDK. Residue lysine 65 participates in substrate binding. A substrate-binding site is contributed by 110-114; that stretch reads NRMGF. FMN is bound by residues asparagine 139 and asparagine 172. Asparagine 172 contacts substrate. Residue serine 175 is the Nucleophile of the active site. Residue asparagine 177 coordinates substrate. FMN is bound by residues lysine 217 and threonine 245. Position 246–247 (246–247) interacts with substrate; it reads NT. Residues glycine 268, glycine 297, and 318–319 each bind FMN; that span reads YS.

The protein belongs to the dihydroorotate dehydrogenase family. Type 2 subfamily. Monomer. FMN serves as cofactor.

Its subcellular location is the cell membrane. The enzyme catalyses (S)-dihydroorotate + a quinone = orotate + a quinol. The protein operates within pyrimidine metabolism; UMP biosynthesis via de novo pathway; orotate from (S)-dihydroorotate (quinone route): step 1/1. Its function is as follows. Catalyzes the conversion of dihydroorotate to orotate with quinone as electron acceptor. The sequence is that of Dihydroorotate dehydrogenase (quinone) from Flavobacterium lutescens.